The following is a 606-amino-acid chain: Elongation factor 4 (606 aa).

In terms of domain architecture, tr-type G spans serine 7–lysine 189. GTP-binding positions include aspartate 19–threonine 24 and asparagine 136–aspartate 139.

This sequence belongs to the TRAFAC class translation factor GTPase superfamily. Classic translation factor GTPase family. LepA subfamily.

It is found in the cell inner membrane. It catalyses the reaction GTP + H2O = GDP + phosphate + H(+). Its function is as follows. Required for accurate and efficient protein synthesis under certain stress conditions. May act as a fidelity factor of the translation reaction, by catalyzing a one-codon backward translocation of tRNAs on improperly translocated ribosomes. Back-translocation proceeds from a post-translocation (POST) complex to a pre-translocation (PRE) complex, thus giving elongation factor G a second chance to translocate the tRNAs correctly. Binds to ribosomes in a GTP-dependent manner. The sequence is that of Elongation factor 4 from Synechococcus sp. (strain CC9605).